The following is a 152-amino-acid chain: MFRGVTSISIDNKGRIAIPTRYRAELREQHEGVLVCTVDIRQPCLLLYPLHEWETVEQKLLALSNFDPMQRRIQRVMQGFATECEMDAAGRILLSPTLRQHAQLEQQIMLVGQLNKFEIWQDKQWQSQIAEDLALGGSAEMLNCEALKNLSL.

SpoVT-AbrB domains lie at 5-52 (VTSI…PLHE) and 81-124 (ATEC…QDKQ).

It belongs to the MraZ family. Forms oligomers.

The protein localises to the cytoplasm. It localises to the nucleoid. This is Transcriptional regulator MraZ from Actinobacillus pleuropneumoniae serotype 3 (strain JL03).